Reading from the N-terminus, the 1240-residue chain is MARQQAPPWVHIALILFLLSLGGAIEIPMDPSIQNELTQPPTITKQSVKDHIVDPRDNILIECEAKGNPAPSFHWTRNSRFFNIAKDPRVSMRRRSGTLVIDFRSGGRPEEYEGEYQCFARNKFGTALSNRIRLQVSKSPLWPKENLDPVVVQEGAPLTLQCNPPPGLPSPVIFWMSSSMEPITQDKRVSQGHNGDLYFSNVMLQDMQTDYSCNARFHFTHTIQQKNPFTLKVLTTRGVAERTPSFMYPQGTSSSQMVLRGMDLLLECIASGVPTPDIAWYKKGGDLPSNKAKFENFNKALRITNVSEEDSGEYFCLASNKMGSIRHTISVRVKAAPYWLDEPKNLILAPGEDGRLVCRANGNPKPTVQWMVNGEPLQSAPPNPNREVAGDTIIFRDTQISSRAVYQCNTSNEHGYLLANAFVSVLDVPPRMLSARNQLIRVILYNRTRLDCPFFGSPIPTLRWFKNGQGSNLDGGNYHVYENGSLEIKMIRKEDQGIYTCVATNILGKAENQVRLEVKDPTRIYRMPEDQVAKRGTTVQLECRVKHDPSLKLTVSWLKDDEPLYIGNRMKKEDDSLTIFGVAERDQGSYTCMASTELDQDLAKAYLTVLADQATPTNRLAALPKGRPDRPRDLELTDLAERSVRLTWIPGDDNNSPITDYVVQFEEDQFQPGVWHDHSRFPGSVNSAVLHLSPYVNYQFRVIAVNEVGSSHPSLPSERYRTSGAPPESNPSDVKGEGTRKNNMEITWTPMNATSAFGPNLRYIVKWRRRETRETWNNVTVWGSRYVVGQTPVYVPYEIRVQAENDFGKGPEPDTIIGYSGEDLPSAPRRFRVRQPNLETINLEWDHPEHPNGILIGYILRYVPFNGTKLGKQMVENFSPNQTKFSVQRADPVSRYRFSLSARTQVGSGEAATEESPAPPNEATPTAAPPTLPPTTVGTTGLVSSTDATALAATSEATTVPIIPTVVPTTVATTIATTTTTTAATTTTTTTESPPTTTAGTKIHETAPDEQSIWNVTVLPNSKWANITWKHNFRPGTDFVVEYIDSNHTKKTVPVKAQAQPIQLTDLFPGMTYTLRVYSRDNEGISSTVITFMTSTAYTNNQADIATQGWFIGLMCAIALLVLILLIVCFIKRSRGGKYPVREKKDVPLGPEDPKEEDGSFDYSDEDNKPLQGSQTSLDGTIKQQESDDSLVDYGEGGEGQFNEDGSFIGQYTVKKDKEETEGNESSEATSPVNAIYSLA.

The N-terminal stretch at 1–24 (MARQQAPPWVHIALILFLLSLGGA) is a signal peptide. The Extracellular portion of the chain corresponds to 25-1110 (IEIPMDPSIQ…NQADIATQGW (1086 aa)). 6 Ig-like C2-type domains span residues 41–137 (PTIT…LQVS), 143–230 (PKEN…NPFT), 244–332 (PSFM…ISVR), 337–424 (PYWL…AFVS), 430–517 (PRML…VRLE), and 521–603 (PTRI…QDLA). 4 disulfides stabilise this stretch: Cys-63–Cys-118, Cys-162–Cys-213, Cys-268–Cys-316, and Cys-358–Cys-408. N-linked (GlcNAc...) asparagine glycosylation is present at Asn-305. Asn-409 and Asn-446 each carry an N-linked (GlcNAc...) asparagine glycan. Cystine bridges form between Cys-452–Cys-501 and Cys-543–Cys-592. Tyr-481 is subject to Phosphotyrosine. An N-linked (GlcNAc...) asparagine glycan is attached at Asn-483. Ser-485 is modified (phosphoserine). 4 consecutive Fibronectin type-III domains span residues 630 to 725 (RPRD…TSGA), 727 to 823 (PESN…SGED), 827 to 923 (APRR…PNEA), and 1007 to 1099 (APDE…TAYT). Positions 710 to 740 (SSHPSLPSERYRTSGAPPESNPSDVKGEGTR) are disordered. Residues Asn-752, Asn-778, Asn-866, and Asn-881 are each glycosylated (N-linked (GlcNAc...) asparagine). Residues 902–942 (ARTQVGSGEAATEESPAPPNEATPTAAPPTLPPTTVGTTGL) form a disordered region. A compositionally biased stretch (low complexity) spans 907-916 (GSGEAATEES). Residues 917–933 (PAPPNEATPTAAPPTLP) are compositionally biased toward pro residues. The chain crosses the membrane as a helical span at residues 1111–1131 (FIGLMCAIALLVLILLIVCFI). The Cytoplasmic segment spans residues 1132–1240 (KRSRGGKYPV…SPVNAIYSLA (109 aa)). The disordered stretch occupies residues 1141–1240 (VREKKDVPLG…SPVNAIYSLA (100 aa)). Over residues 1154 to 1165 (PKEEDGSFDYSD) the composition is skewed to acidic residues. Residues Ser-1160, Ser-1174, Ser-1187, Ser-1190, Ser-1226, Ser-1227, and Ser-1231 each carry the phosphoserine modification. Positions 1171–1184 (LQGSQTSLDGTIKQ) are enriched in polar residues.

The protein belongs to the immunoglobulin superfamily. L1/neurofascin/NgCAM family. As to quaternary structure, horseshoe-shaped homodimer. Probable constituent of a NFASC/NRCAM/ankyrin-G complex. Associates with the sodium channel beta-1 (SCN1B) and beta-3 (SCN3B) subunits. Interacts with GLDN/gliomedin. Interacts with MYOC.

The protein localises to the cell membrane. Cell adhesion, ankyrin-binding protein which may be involved in neurite extension, axonal guidance, synaptogenesis, myelination and neuron-glial cell interactions. This is Neurofascin (Nfasc) from Mus musculus (Mouse).